The primary structure comprises 179 residues: MYEYLDRRYALALYEVAEENNKVDEYLRDLKEVVNIIKNSEDICKILKHPEINTSRKKEIFTELFKDKVDNKILSFLLVLIEKDRILYLEEKLKEMEKIYLEKNNMILANIKTVIPLLKEEREELIEKLGNKYNKKIILEEEIDKSIIGGVYVRVGDDVLDGTLSTRLKDIKKMMLKRE.

It belongs to the ATPase delta chain family. As to quaternary structure, F-type ATPases have 2 components, F(1) - the catalytic core - and F(0) - the membrane proton channel. F(1) has five subunits: alpha(3), beta(3), gamma(1), delta(1), epsilon(1). F(0) has three main subunits: a(1), b(2) and c(10-14). The alpha and beta chains form an alternating ring which encloses part of the gamma chain. F(1) is attached to F(0) by a central stalk formed by the gamma and epsilon chains, while a peripheral stalk is formed by the delta and b chains.

It is found in the cell membrane. In terms of biological role, f(1)F(0) ATP synthase produces ATP from ADP in the presence of a proton or sodium gradient. F-type ATPases consist of two structural domains, F(1) containing the extramembraneous catalytic core and F(0) containing the membrane proton channel, linked together by a central stalk and a peripheral stalk. During catalysis, ATP synthesis in the catalytic domain of F(1) is coupled via a rotary mechanism of the central stalk subunits to proton translocation. Its function is as follows. This protein is part of the stalk that links CF(0) to CF(1). It either transmits conformational changes from CF(0) to CF(1) or is implicated in proton conduction. This chain is ATP synthase subunit delta, found in Clostridium botulinum (strain Kyoto / Type A2).